Reading from the N-terminus, the 85-residue chain is ATP synthase subunit c (85 aa).

A run of 2 helical transmembrane segments spans residues 10-30 and 53-73; these read IAVA…FGLL and FIVA…ALFF.

It belongs to the ATPase C chain family. As to quaternary structure, F-type ATPases have 2 components, F(1) - the catalytic core - and F(0) - the membrane proton channel. F(1) has five subunits: alpha(3), beta(3), gamma(1), delta(1), epsilon(1). F(0) has three main subunits: a(1), b(2) and c(10-14). The alpha and beta chains form an alternating ring which encloses part of the gamma chain. F(1) is attached to F(0) by a central stalk formed by the gamma and epsilon chains, while a peripheral stalk is formed by the delta and b chains.

It localises to the cell inner membrane. Its function is as follows. F(1)F(0) ATP synthase produces ATP from ADP in the presence of a proton or sodium gradient. F-type ATPases consist of two structural domains, F(1) containing the extramembraneous catalytic core and F(0) containing the membrane proton channel, linked together by a central stalk and a peripheral stalk. During catalysis, ATP synthesis in the catalytic domain of F(1) is coupled via a rotary mechanism of the central stalk subunits to proton translocation. In terms of biological role, key component of the F(0) channel; it plays a direct role in translocation across the membrane. A homomeric c-ring of between 10-14 subunits forms the central stalk rotor element with the F(1) delta and epsilon subunits. In Pseudomonas aeruginosa (strain LESB58), this protein is ATP synthase subunit c.